The chain runs to 534 residues: Importin subunit alpha-1b (534 aa).

One can recognise an IBB domain in the interval 1 to 58 (MSLRPSERAEVRRSRYKVAVDADEGRRRREDNMVEIRKSRREESLLKKRRDGLPAAAA). ARM repeat units lie at residues 111 to 151 (SPPI…NIAS), 154 to 193 (SDNT…NVAG), 196 to 236 (PKCR…NFCR), 238 to 277 (KPQP…YLSD), 280 to 319 (NDKI…NIVT), 322 to 362 (DMQT…NITA), 365 to 404 (REQI…NATS), and 408 to 447 (HDQI…NILK). The tract at residues 505–534 (DAMPSGDNAQNGFNFGNQQPNVPSGGFNFG) is disordered. Positions 514-523 (QNGFNFGNQQ) are enriched in low complexity.

This sequence belongs to the importin alpha family. In terms of assembly, forms a complex with importin subunit beta-1. The whole complex, most stable and composed of importin alpha and importin beta, is referred to as PTAC or pore targeting complex. In terms of tissue distribution, highly expressed in root and weakly in callus, etiolated leaf and green leaf.

It is found in the cytoplasm. The protein resides in the perinuclear region. Its function is as follows. Functions in nuclear protein import. Binds specifically and directly to substrates containing either a simple or bipartite NLS motif. Promotes docking of import substrates to the nuclear envelope. In conjunction with importin beta-1, mediates the nuclear envelope docking, and the subsequent translocation into the nucleus of the constitutive morphogenetic 1 (COP1) protein containing bipartite NLS motif. This chain is Importin subunit alpha-1b, found in Oryza sativa subsp. japonica (Rice).